Reading from the N-terminus, the 1141-residue chain is Isoleucine--tRNA ligase (1141 aa).

The 'HIGH' region motif lies at 50–60; the sequence is PSANGMPGIHH. The 'KMSKS' region signature appears at 689 to 693; sequence KMSKR. Position 692 (K692) interacts with ATP.

It belongs to the class-I aminoacyl-tRNA synthetase family. IleS type 2 subfamily. In terms of assembly, monomer. Zn(2+) serves as cofactor.

The protein localises to the cytoplasm. It carries out the reaction tRNA(Ile) + L-isoleucine + ATP = L-isoleucyl-tRNA(Ile) + AMP + diphosphate. Functionally, catalyzes the attachment of isoleucine to tRNA(Ile). As IleRS can inadvertently accommodate and process structurally similar amino acids such as valine, to avoid such errors it has two additional distinct tRNA(Ile)-dependent editing activities. One activity is designated as 'pretransfer' editing and involves the hydrolysis of activated Val-AMP. The other activity is designated 'posttransfer' editing and involves deacylation of mischarged Val-tRNA(Ile). This Bacteroides fragilis (strain YCH46) protein is Isoleucine--tRNA ligase.